Here is a 678-residue protein sequence, read N- to C-terminus: Glutamic acid-rich protein (678 aa).

The signal sequence occupies residues 1–25 (MNVLFLSYNICILFFVVCTLNFSTK). Residues 56 to 79 (EKNKDDNSKSETLLKEEKDEKDDV) are compositionally biased toward basic and acidic residues. Disordered regions lie at residues 56–194 (EKNK…NLDE), 225–445 (ISSV…VVKN), and 520–678 (VVPR…NAKI). Residues 80 to 107 (PTTSNDNLKNAHNNNEISSSTDPTNIIN) show a composition bias toward polar residues. Over residues 109–120 (NDKDNENSVDKK) the composition is skewed to basic and acidic residues. A run of 15 repeats spans residues 120–122 (KKD), 123–125 (KKE), 126–128 (KKH), 129–131 (KKD), 132–134 (KKE), 135–137 (KKE), 138–140 (KKD), 141–143 (KKE), 144–146 (KKD), 147–149 (KKE), 150–152 (KKH), 153–155 (KKE), 156–158 (KKH), 159–161 (KKD), and 162–164 (KKK). The 15 X 3 AA tandem repeats of K-K-[DEHK] stretch occupies residues 120-164 (KKDKKEKKHKKDKKEKKEKKDKKEKKDKKEKKHKKEKKHKKDKKK). Residues 121-165 (KDKKEKKHKKDKKEKKEKKDKKEKKDKKEKKHKKEKKHKKDKKKK) show a composition bias toward basic residues. 2 stretches are compositionally biased toward basic and acidic residues: residues 231 to 329 (TSND…EEKE) and 371 to 411 (PEEH…EHKS). 14 consecutive repeat copies span residues 372-376 (EEHKE), 377-381 (GEHKE), 382-386 (EEHKE), 387-391 (GEHKE), 392-396 (GEHKE), 397-401 (EEHKE), 402-406 (EEHKK), 407-411 (EEHKS), 412-416 (KEHKS), 417-421 (KGKKD), 422-426 (KGKKD), 427-431 (KGKHK), 432-436 (KAKKE), and 437-441 (KVKKH). Residues 372–416 (EEHKEGEHKEEEHKEGEHKEGEHKEEEHKEEEHKKEEHKSKEHKS) form a 9 X 5 AA tandem repeats of [EGK]-E-H-K-[EKS] region. The segment covering 412–443 (KEHKSKGKKDKGKKDKGKHKKAKKEKVKKHVV) has biased composition (basic residues). The segment at 417 to 441 (KGKKDKGKKDKGKHKKAKKEKVKKH) is 5 X 5 AA tandem repeats of K-[GAV]-K-[KH]-[DKEH]. The span at 532–565 (AKIEEAELQKQKHVDKEEDKKEESKEVQEESKEV) shows a compositional bias: basic and acidic residues. Over residues 566–663 (QEDEEEVEED…EEEEEEEEEE (98 aa)) the composition is skewed to acidic residues. Basic residues predominate over residues 667 to 678 (KIKRNLRKNAKI).

This chain is Glutamic acid-rich protein (GARP), found in Plasmodium falciparum (isolate FC27 / Papua New Guinea).